The sequence spans 934 residues: AP-2 complex subunit alpha (934 aa).

The interval 623 to 670 (RVPENAEIRETKSPVPNSHNNAHSNAQTNHTSSANNANASSDLLGLST) is disordered. Residues 636 to 645 (PVPNSHNNAH) show a composition bias toward polar residues. Residues 646-663 (SNAQTNHTSSANNANASS) show a composition bias toward low complexity.

This sequence belongs to the adapter complexes large subunit family. As to quaternary structure, adaptor protein complex 2 (AP-2) is a heterotetramer composed of two large adaptins (alpha-type and beta-type subunits), a medium adaptin (mu-type subunit AP50) and a small adaptin (sigma-type subunit AP17).

It localises to the cell membrane. Its subcellular location is the membrane. It is found in the coated pit. Adaptins are components of the adapter complexes which link clathrin to receptors in coated vesicles. Clathrin-associated protein complexes are believed to interact with the cytoplasmic tails of membrane proteins, leading to their selection and concentration. Alpha adaptin is a subunit of the plasma membrane adapter. In Anopheles gambiae (African malaria mosquito), this protein is AP-2 complex subunit alpha.